The sequence spans 379 residues: Carbamoyl phosphate synthase small chain (379 aa).

The segment at Met-1–Glu-183 is CPSase. Residues Ser-51, Gly-235, and Gly-237 each coordinate L-glutamine. The 195-residue stretch at Leu-185–Lys-379 folds into the Glutamine amidotransferase type-1 domain. Cys-263 (nucleophile) is an active-site residue. L-glutamine-binding residues include Phe-264, Gln-267, Asn-305, Gly-307, and Phe-308. Catalysis depends on residues His-353 and Glu-355.

The protein belongs to the CarA family. In terms of assembly, composed of two chains; the small (or glutamine) chain promotes the hydrolysis of glutamine to ammonia, which is used by the large (or ammonia) chain to synthesize carbamoyl phosphate. Tetramer of heterodimers (alpha,beta)4.

The enzyme catalyses hydrogencarbonate + L-glutamine + 2 ATP + H2O = carbamoyl phosphate + L-glutamate + 2 ADP + phosphate + 2 H(+). It carries out the reaction L-glutamine + H2O = L-glutamate + NH4(+). It functions in the pathway amino-acid biosynthesis; L-arginine biosynthesis; carbamoyl phosphate from bicarbonate: step 1/1. The protein operates within pyrimidine metabolism; UMP biosynthesis via de novo pathway; (S)-dihydroorotate from bicarbonate: step 1/3. In terms of biological role, small subunit of the glutamine-dependent carbamoyl phosphate synthetase (CPSase). CPSase catalyzes the formation of carbamoyl phosphate from the ammonia moiety of glutamine, carbonate, and phosphate donated by ATP, constituting the first step of 2 biosynthetic pathways, one leading to arginine and/or urea and the other to pyrimidine nucleotides. The small subunit (glutamine amidotransferase) binds and cleaves glutamine to supply the large subunit with the substrate ammonia. This Corynebacterium diphtheriae (strain ATCC 700971 / NCTC 13129 / Biotype gravis) protein is Carbamoyl phosphate synthase small chain.